Reading from the N-terminus, the 246-residue chain is 5-oxoprolinase subunit A (246 aa).

This sequence belongs to the LamB/PxpA family. In terms of assembly, forms a complex composed of PxpA, PxpB and PxpC.

The enzyme catalyses 5-oxo-L-proline + ATP + 2 H2O = L-glutamate + ADP + phosphate + H(+). Its function is as follows. Catalyzes the cleavage of 5-oxoproline to form L-glutamate coupled to the hydrolysis of ATP to ADP and inorganic phosphate. This is 5-oxoprolinase subunit A from Cupriavidus metallidurans (strain ATCC 43123 / DSM 2839 / NBRC 102507 / CH34) (Ralstonia metallidurans).